Here is a 348-residue protein sequence, read N- to C-terminus: Gamma-glutamyl hydrolase 1 (348 aa).

The N-terminal stretch at 1 to 23 is a signal peptide; the sequence is MIDNNCLYKEELNRNSYSGLAKE. One can recognise a Gamma-glutamyl hydrolase domain in the interval 46 to 342; it reads SPDPNLNYRP…RGYDEVYIFT (297 aa). Cys-156 serves as the catalytic Nucleophile. His-269 is an active-site residue.

Belongs to the peptidase C26 family. As to expression, highly expressed in roots and at lower levels in leaves, stems and siliques.

Its subcellular location is the vacuole. It is found in the secreted. The protein resides in the extracellular space. It localises to the cell wall. The enzyme catalyses (6S)-5,6,7,8-tetrahydrofolyl-(gamma-L-Glu)(n) + (n-1) H2O = (6S)-5,6,7,8-tetrahydrofolate + (n-1) L-glutamate. In terms of biological role, cleaves the polyglutamate sidechains of folate polyglutamates in the vacuole. Is important for polyglutamyl tail length determination before vacuolar exit. Plays a role in folate stability and intracellular folate content. The sequence is that of Gamma-glutamyl hydrolase 1 (GGH1) from Arabidopsis thaliana (Mouse-ear cress).